The sequence spans 802 residues: Acetyl-CoA decarbonylase/synthase complex subunit alpha (802 aa).

Positions 69, 72, 73, 75, 80, and 90 each coordinate [4Fe-4S] cluster. H113 contacts CO. [Ni-4Fe-4S] cluster contacts are provided by H246, C274, and C319. 4Fe-4S ferredoxin-type domains follow at residues 404 to 432 (EELK…ISEA) and 442 to 473 (SKFE…VIEK). [4Fe-4S] cluster is bound by residues C413, C416, C419, C423, C451, C454, C457, and C461. [Ni-4Fe-4S] cluster is bound by residues C519, C548, and C583.

This sequence belongs to the Ni-containing carbon monoxide dehydrogenase family. Heterotetramer of two alpha and two epsilon subunits. The ACDS complex is made up of alpha, epsilon, beta, gamma and delta subunits with a probable stoichiometry of (alpha(2)epsilon(2))(4)-beta(8)-(gamma(1)delta(1))(8). The cofactor is [4Fe-4S] cluster. [Ni-4Fe-4S] cluster is required as a cofactor.

It carries out the reaction CO + 2 oxidized [2Fe-2S]-[ferredoxin] + H2O = 2 reduced [2Fe-2S]-[ferredoxin] + CO2 + 2 H(+). Its pathway is one-carbon metabolism; methanogenesis from acetate. Its function is as follows. Part of the ACDS complex that catalyzes the reversible cleavage of acetyl-CoA, allowing growth on acetate as sole source of carbon and energy. The alpha-epsilon subcomponent functions as a carbon monoxide dehydrogenase. This is Acetyl-CoA decarbonylase/synthase complex subunit alpha from Methanococcoides burtonii (strain DSM 6242 / NBRC 107633 / OCM 468 / ACE-M).